We begin with the raw amino-acid sequence, 341 residues long: C2 calcium-dependent domain-containing protein 4D (341 aa).

Over residues 56–71 (RLRDPRGAEGRVDRNP) the composition is skewed to basic and acidic residues. Disordered regions lie at residues 56–75 (RLRD…GGRN) and 134–176 (CRAP…PYAP). Residues 139-149 (SDTASSPDSSP) show a composition bias toward low complexity. The C2 domain occupies 205 to 331 (RGGQLRLSTE…PPLAGGLGPG (127 aa)).

The sequence is that of C2 calcium-dependent domain-containing protein 4D (C2cd4d) from Mus musculus (Mouse).